The primary structure comprises 445 residues: Phosphoglucosamine mutase (445 aa).

Catalysis depends on Ser-102, which acts as the Phosphoserine intermediate. The Mg(2+) site is built by Ser-102, Asp-241, Asp-243, and Asp-245. Ser-102 bears the Phosphoserine mark.

The protein belongs to the phosphohexose mutase family. Requires Mg(2+) as cofactor. Post-translationally, activated by phosphorylation.

It catalyses the reaction alpha-D-glucosamine 1-phosphate = D-glucosamine 6-phosphate. Functionally, catalyzes the conversion of glucosamine-6-phosphate to glucosamine-1-phosphate. The protein is Phosphoglucosamine mutase of Rhodococcus opacus (strain B4).